Reading from the N-terminus, the 313-residue chain is Monoglyceride lipase (313 aa).

The short motif at 121–125 (GHSMG) is the GXSXG element. Catalysis depends on S123, which acts as the Nucleophile. Active-site charge relay system residues include D251 and H281.

Belongs to the AB hydrolase superfamily. Monoacylglycerol lipase family.

It is found in the lipid droplet. The protein localises to the cytoplasm. Its subcellular location is the endoplasmic reticulum. It localises to the mitochondrion outer membrane. It carries out the reaction Hydrolyzes glycerol monoesters of long-chain fatty acids.. The enzyme catalyses a fatty acid ethyl ester + H2O = ethanol + a fatty acid + H(+). It catalyses the reaction 1-(9Z-octadecenoyl)-glycerol + H2O = glycerol + (9Z)-octadecenoate + H(+). The catalysed reaction is 2-(9Z-octadecenoyl)-glycerol + H2O = glycerol + (9Z)-octadecenoate + H(+). It carries out the reaction 1-hexadecanoylglycerol + H2O = glycerol + hexadecanoate + H(+). The enzyme catalyses 2-hexadecanoylglycerol + H2O = glycerol + hexadecanoate + H(+). It catalyses the reaction ethyl hexadecanoate + H2O = ethanol + hexadecanoate + H(+). The catalysed reaction is ethyl (9Z)-octadecenoate + H2O = ethanol + (9Z)-octadecenoate + H(+). It carries out the reaction ethyl (9Z)-hexadecenoate + H2O = (9Z)-hexadecenoate + ethanol + H(+). The enzyme catalyses ethyl octadecanoate + H2O = ethanol + octadecanoate + H(+). It participates in glycerolipid metabolism; triacylglycerol degradation. In terms of biological role, converts monoacylglycerides (MAG) to free fatty acids and glycerol. Has a strong preference for monounsaturated monoglycerides. Required for efficient degradation of MAG, short-lived intermediates of glycerolipid metabolism which may also function as lipid signaling molecules. Controls inactivation of the signaling lipid N-palmitoylethanolamine (PEA). Involved in fatty acid ethyl ester (FAEE) catabolism. FAEEs are non-oxidative metabolites of ethanol that are transiently incorporated into lipid droplets (LDs). Their mobilization by LD-resident FAEE hydrolases facilitates a controlled metabolism of these potentially toxic lipid metabolites. The chain is Monoglyceride lipase (YJU3) from Saccharomyces cerevisiae (strain ATCC 204508 / S288c) (Baker's yeast).